The following is a 348-amino-acid chain: Lipoyl synthase (348 aa).

Residues 1–45 (MSESAKPRITSGSKFRNEHGFSAIKDGVKRSSSNTEGKSLERKPK) form a disordered region. Positions 73, 78, 84, 99, 103, 106, and 314 each coordinate [4Fe-4S] cluster. One can recognise a Radical SAM core domain in the interval 85 to 303 (WTNGTATIMV…RDIGLEKGFM (219 aa)).

The protein belongs to the radical SAM superfamily. Lipoyl synthase family. The cofactor is [4Fe-4S] cluster.

It localises to the cytoplasm. The catalysed reaction is [[Fe-S] cluster scaffold protein carrying a second [4Fe-4S](2+) cluster] + N(6)-octanoyl-L-lysyl-[protein] + 2 oxidized [2Fe-2S]-[ferredoxin] + 2 S-adenosyl-L-methionine + 4 H(+) = [[Fe-S] cluster scaffold protein] + N(6)-[(R)-dihydrolipoyl]-L-lysyl-[protein] + 4 Fe(3+) + 2 hydrogen sulfide + 2 5'-deoxyadenosine + 2 L-methionine + 2 reduced [2Fe-2S]-[ferredoxin]. It participates in protein modification; protein lipoylation via endogenous pathway; protein N(6)-(lipoyl)lysine from octanoyl-[acyl-carrier-protein]: step 2/2. Catalyzes the radical-mediated insertion of two sulfur atoms into the C-6 and C-8 positions of the octanoyl moiety bound to the lipoyl domains of lipoate-dependent enzymes, thereby converting the octanoylated domains into lipoylated derivatives. The sequence is that of Lipoyl synthase from Marinobacter nauticus (strain ATCC 700491 / DSM 11845 / VT8) (Marinobacter aquaeolei).